The following is a 190-amino-acid chain: Elongation factor P (190 aa).

It belongs to the elongation factor P family.

It localises to the cytoplasm. It functions in the pathway protein biosynthesis; polypeptide chain elongation. Its function is as follows. Involved in peptide bond synthesis. Stimulates efficient translation and peptide-bond synthesis on native or reconstituted 70S ribosomes in vitro. Probably functions indirectly by altering the affinity of the ribosome for aminoacyl-tRNA, thus increasing their reactivity as acceptors for peptidyl transferase. This chain is Elongation factor P, found in Amoebophilus asiaticus (strain 5a2).